Reading from the N-terminus, the 277-residue chain is 2-dehydro-3-deoxyphosphooctonate aldolase (277 aa).

The protein belongs to the KdsA family.

The protein localises to the cytoplasm. The enzyme catalyses D-arabinose 5-phosphate + phosphoenolpyruvate + H2O = 3-deoxy-alpha-D-manno-2-octulosonate-8-phosphate + phosphate. It functions in the pathway carbohydrate biosynthesis; 3-deoxy-D-manno-octulosonate biosynthesis; 3-deoxy-D-manno-octulosonate from D-ribulose 5-phosphate: step 2/3. Its pathway is bacterial outer membrane biogenesis; lipopolysaccharide biosynthesis. The polypeptide is 2-dehydro-3-deoxyphosphooctonate aldolase (kdsA) (Mesorhizobium japonicum (strain LMG 29417 / CECT 9101 / MAFF 303099) (Mesorhizobium loti (strain MAFF 303099))).